Consider the following 396-residue polypeptide: Odorant receptor 49a (396 aa).

Residues 1–6 are Cytoplasmic-facing; sequence MEKLRS. The helical transmembrane segment at 7-27 threads the bilayer; the sequence is YEDFIFMANMMFKTLGYDLFH. Over 28–34 the chain is Extracellular; that stretch reads TPKPWWR. The chain crosses the membrane as a helical span at residues 35–55; that stretch reads YLLVRGYFVLCTISNFYEASM. Topologically, residues 56-70 are cytoplasmic; that stretch reads VTTRIIEWESLAGSP. A helical membrane pass occupies residues 71-91; it reads SKIMRQGLHFFYMLSSQLKFI. Topologically, residues 92 to 141 are extracellular; sequence TFMINRKRLLQLSHRLKELYPHKEQNQRKYEVNKYYLSCSTRNVLYVYYF. Residues 142–162 traverse the membrane as a helical segment; that stretch reads VMVVMALEPLVQSCIMYLIGF. The Cytoplasmic portion of the chain corresponds to 163 to 209; sequence GKADFTYKRIFPTRLTFDSEKPLGYVLAYVIDFTYSQFIVNVSLGTD. The chain crosses the membrane as a helical span at residues 210–230; it reads LWMMCVSSQISMHLGYLANML. Over 231–266 the chain is Extracellular; the sequence is ASIRPSPETEQQDCDFLASIIKRHQLMIRLQKDVNY. Residues 267–287 traverse the membrane as a helical segment; it reads VFGLLLASNLFTTSCLLCCMA. The Cytoplasmic portion of the chain corresponds to 288–296; sequence YYTVVEGFN. Residues 297-317 traverse the membrane as a helical segment; that stretch reads WEGISYMMLFASVAAQFYVVS. The Extracellular segment spans residues 318-396; sequence SHGQMLIDLS…FAVIRQTVEK (79 aa).

Belongs to the insect chemoreceptor superfamily. Heteromeric odorant receptor channel (TC 1.A.69) family. Or49a subfamily. As to quaternary structure, interacts with Orco. Complexes exist early in the endomembrane system in olfactory sensory neurons (OSNs), coupling these complexes to the conserved ciliary trafficking pathway.

Its subcellular location is the cell membrane. Functionally, odorant receptor which mediates acceptance or avoidance behavior, depending on its substrates. The odorant receptor repertoire encodes a large collection of odor stimuli that vary widely in identity, intensity, and duration. May form a complex with Orco to form odorant-sensing units, providing sensitive and prolonged odorant signaling and calcium permeability. Involved in the behavioral responses to butanol and 2-heptanone. The chain is Odorant receptor 49a (Or49a) from Drosophila melanogaster (Fruit fly).